An 82-amino-acid polypeptide reads, in one-letter code: RNA-binding protein BH0128 (82 aa).

Belongs to the eukaryotic ribosomal protein eL8 family.

This Halalkalibacterium halodurans (strain ATCC BAA-125 / DSM 18197 / FERM 7344 / JCM 9153 / C-125) (Bacillus halodurans) protein is RNA-binding protein BH0128.